Consider the following 223-residue polypeptide: Membrane protein (223 aa).

The Virion surface portion of the chain corresponds to 1-18; the sequence is MAENCTLDSEQAVLLFKE. The chain crosses the membrane as a helical span at residues 19–39; sequence YNLFITAFLLFLTILLQYGYA. Over 40–49 the chain is Intravirion; sequence TRSRTIYILK. Residues 50–70 traverse the membrane as a helical segment; it reads MIVLWCFWPLNIAVGVISCIY. At 71 to 75 the chain is on the virion surface side; sequence PPNTG. A helical membrane pass occupies residues 76 to 96; it reads GLVAAIILTVFACLSFVGYWI. Over 97–223 the chain is Intravirion; that stretch reads QSCRLFKRCR…VATGGSSLYT (127 aa).

Belongs to the gammacoronaviruses M protein family. In terms of assembly, homomultimer. Interacts with envelope E protein in the budding compartment of the host cell, which is located between endoplasmic reticulum and the Golgi complex. Forms a complex with HE and S proteins. Interacts with nucleocapsid N protein. This interaction probably participates in RNA packaging into the virus.

The protein resides in the virion membrane. It is found in the host Golgi apparatus membrane. Component of the viral envelope that plays a central role in virus morphogenesis and assembly via its interactions with other viral proteins. This chain is Membrane protein, found in Gallus gallus (Chicken).